A 157-amino-acid polypeptide reads, in one-letter code: SsrA-binding protein (157 aa).

The disordered stretch occupies residues 132–157; that stretch reads KLHDKRETEKKRDWSREKGRLLRSRG. Over residues 135-151 the composition is skewed to basic and acidic residues; it reads DKRETEKKRDWSREKGR.

This sequence belongs to the SmpB family.

The protein resides in the cytoplasm. Required for rescue of stalled ribosomes mediated by trans-translation. Binds to transfer-messenger RNA (tmRNA), required for stable association of tmRNA with ribosomes. tmRNA and SmpB together mimic tRNA shape, replacing the anticodon stem-loop with SmpB. tmRNA is encoded by the ssrA gene; the 2 termini fold to resemble tRNA(Ala) and it encodes a 'tag peptide', a short internal open reading frame. During trans-translation Ala-aminoacylated tmRNA acts like a tRNA, entering the A-site of stalled ribosomes, displacing the stalled mRNA. The ribosome then switches to translate the ORF on the tmRNA; the nascent peptide is terminated with the 'tag peptide' encoded by the tmRNA and targeted for degradation. The ribosome is freed to recommence translation, which seems to be the essential function of trans-translation. This Rhodopseudomonas palustris (strain ATCC BAA-98 / CGA009) protein is SsrA-binding protein.